Here is a 48-residue protein sequence, read N- to C-terminus: Light-harvesting polypeptide B-885 beta-2 chain (48 aa).

Over 1–20 (AEDRKSLSGLTEQEAQEFGT) the chain is Cytoplasmic. The helical transmembrane segment at 21–43 (LYTQGVAFVAVIAIVAHALVWAW) threads the bilayer. His37 contacts a bacteriochlorophyll. Residues 44 to 48 (RPWLQ) are Periplasmic-facing.

The protein belongs to the antenna complex beta subunit family. In terms of assembly, the core complex is formed by different alpha and beta chains, binding bacteriochlorophyll molecules, and arranged most probably in tetrameric structures disposed around the reaction center. The non-pigmented gamma chains may constitute additional components.

It localises to the cell inner membrane. Functionally, antenna complexes are light-harvesting systems, which transfer the excitation energy to the reaction centers. The protein is Light-harvesting polypeptide B-885 beta-2 chain of Rhodocyclus tenuis (Rhodospirillum tenue).